The sequence spans 260 residues: 5'-nucleotidase SurE (260 aa).

Residues D19, D20, S51, and N104 each contribute to the a divalent metal cation site.

Belongs to the SurE nucleotidase family. The cofactor is a divalent metal cation.

It localises to the cytoplasm. It carries out the reaction a ribonucleoside 5'-phosphate + H2O = a ribonucleoside + phosphate. Nucleotidase that shows phosphatase activity on nucleoside 5'-monophosphates. The protein is 5'-nucleotidase SurE of Paramagnetospirillum magneticum (strain ATCC 700264 / AMB-1) (Magnetospirillum magneticum).